The following is a 333-amino-acid chain: Acetoin:2,6-dichlorophenolindophenol oxidoreductase subunit alpha (333 aa).

As to quaternary structure, tetramer of 2 alpha and 2 beta subunits. The cofactor is thiamine diphosphate.

The protein operates within ketone degradation; acetoin degradation. Functionally, catalyzes the 2,6-dichlorophenolindophenol-dependent cleavage of acetoin into acetate and acetaldehyde. The alpha subunit is probably the catalytic subunit of the enzyme. This is Acetoin:2,6-dichlorophenolindophenol oxidoreductase subunit alpha (acoA) from Bacillus subtilis (strain 168).